The following is a 182-amino-acid chain: Putative manganese efflux pump MntP (182 aa).

6 helical membrane passes run 6 to 26 (LIPL…VSLG), 37 to 57 (ILYI…IGMV), 72 to 92 (FAGA…SILE), 101 to 121 (IGIS…SVGL), 131 to 151 (IITI…GLLL), and 162 to 182 (YGEI…LFPI).

It belongs to the MntP (TC 9.B.29) family.

The protein localises to the cell membrane. Its function is as follows. Probably functions as a manganese efflux pump. This Bacillus mycoides (strain KBAB4) (Bacillus weihenstephanensis) protein is Putative manganese efflux pump MntP.